A 619-amino-acid polypeptide reads, in one-letter code: DBH-like monooxygenase protein 2 (619 aa).

The N-terminal stretch at 1 to 21 is a signal peptide; that stretch reads MACVLLFRLFLLLVLAAFSQG. Over 22-594 the chain is Extracellular; it reads KRLGPTSPLR…LSGSNTATLR (573 aa). Residues 40-156 form the DOMON domain; that stretch reads RAVFLRWDFD…DTMRVLAAYG (117 aa). Tyr209 is an active-site residue. Intrachain disulfides connect Cys211-Cys261 and Cys248-Cys271. His241 and His242 together coordinate Cu cation. An N-linked (GlcNAc...) asparagine glycan is attached at Asn250. Residues His309, His390, and His392 each coordinate Cu cation. 2 disulfides stabilise this stretch: Cys366–Cys481 and Cys444–Cys466. The active site involves His390. Residue Asn405 is glycosylated (N-linked (GlcNAc...) asparagine). Position 465 (Met465) interacts with Cu cation. Residue Asn477 is glycosylated (N-linked (GlcNAc...) asparagine). Residues 595–615 traverse the membrane as a helical segment; that stretch reads PLPMIAVLFLQGSLSCLLAML. Over 616 to 619 the chain is Cytoplasmic; the sequence is QTGV.

Belongs to the copper type II ascorbate-dependent monooxygenase family. It depends on Cu(2+) as a cofactor. In terms of tissue distribution, expressed at low levels in thymus and testis.

The protein localises to the membrane. In Mus musculus (Mouse), this protein is DBH-like monooxygenase protein 2 (Moxd2).